The primary structure comprises 467 residues: Gamma-aminobutyric acid receptor subunit gamma-3 (467 aa).

Residues 1–17 (MAPKLLLLLCLFSGLHA) form the signal peptide. At 18–256 (RSRKVEEDEY…FELSRRMGYF (239 aa)) the chain is on the extracellular side. Asn110 carries N-linked (GlcNAc...) asparagine glycosylation. A disulfide bridge links Cys171 with Cys185. Asn228 carries N-linked (GlcNAc...) asparagine glycosylation. A helical membrane pass occupies residues 257–277 (TIQTYIPCILTVVLSWVSFWI). Residues 278 to 283 (KKDATP) are Cytoplasmic-facing. A helical membrane pass occupies residues 284 to 303 (ARTALGITTVLTMTTLSTIA). Residues 304–311 (RKSLPRVS) lie on the Extracellular side of the membrane. The chain crosses the membrane as a helical span at residues 312–332 (YVTAMDLFVTVCFLFVFAALM). At 333 to 446 (EYATLNYYSS…DILELDSYSR (114 aa)) the chain is on the cytoplasmic side. A helical transmembrane segment spans residues 447–467 (VFFPTSFLLFNLVYWVGYLYL).

The protein belongs to the ligand-gated ion channel (TC 1.A.9) family. Gamma-aminobutyric acid receptor (TC 1.A.9.5) subfamily. GABRG3 sub-subfamily. In terms of assembly, heteropentamer, formed by a combination of alpha (GABRA1-6), beta (GABRB1-3), gamma (GABRG1-3), delta (GABRD), epsilon (GABRE), rho (GABRR1-3), pi (GABRP) and theta (GABRQ) chains, each subunit exhibiting distinct physiological and pharmacological properties. Post-translationally, may be palmitoylated. As to expression, expressed in brain.

Its subcellular location is the postsynaptic cell membrane. It localises to the cell membrane. It catalyses the reaction chloride(in) = chloride(out). Its function is as follows. Gamma subunit of the heteropentameric ligand-gated chloride channel gated by gamma-aminobutyric acid (GABA), a major inhibitory neurotransmitter in the brain. GABA-gated chloride channels, also named GABA(A) receptors (GABAAR), consist of five subunits arranged around a central pore and contain GABA active binding site(s) located at the alpha and beta subunit interface(s). When activated by GABA, GABAARs selectively allow the flow of chloride across the cell membrane down their electrochemical gradient. In Homo sapiens (Human), this protein is Gamma-aminobutyric acid receptor subunit gamma-3.